The chain runs to 286 residues: Polyamine aminopropyltransferase (286 aa).

One can recognise a PABS domain in the interval 5–238; sequence TMWHETLHDQ…GIMTFAWATD (234 aa). Position 33 (Gln-33) interacts with S-methyl-5'-thioadenosine. Spermidine contacts are provided by His-64 and Asp-88. Residues Glu-108 and 140–141 each bind S-methyl-5'-thioadenosine; that span reads DG. Asp-158 functions as the Proton acceptor in the catalytic mechanism. Spermidine is bound at residue 158 to 161; sequence DCTD. Pro-165 serves as a coordination point for S-methyl-5'-thioadenosine.

Belongs to the spermidine/spermine synthase family. In terms of assembly, homodimer or homotetramer.

It localises to the cytoplasm. It catalyses the reaction S-adenosyl 3-(methylsulfanyl)propylamine + putrescine = S-methyl-5'-thioadenosine + spermidine + H(+). It functions in the pathway amine and polyamine biosynthesis; spermidine biosynthesis; spermidine from putrescine: step 1/1. Functionally, catalyzes the irreversible transfer of a propylamine group from the amino donor S-adenosylmethioninamine (decarboxy-AdoMet) to putrescine (1,4-diaminobutane) to yield spermidine. The protein is Polyamine aminopropyltransferase of Salmonella newport (strain SL254).